The following is a 543-amino-acid chain: CTP synthase (543 aa).

The interval 1–265 is amidoligase domain; that stretch reads MTRYIFVTGG…DDFVVERFGL (265 aa). Ser-13 serves as a coordination point for CTP. Ser-13 is a UTP binding site. ATP is bound by residues 14 to 19 and Asp-71; that span reads SLGKGI. Mg(2+)-binding residues include Asp-71 and Glu-139. Residues 146 to 148, 186 to 191, and Lys-222 each bind CTP; these read DIE and KTKPTQ. UTP contacts are provided by residues 186–191 and Lys-222; that span reads KTKPTQ. A Glutamine amidotransferase type-1 domain is found at 290–541; sequence TIAMVGKYME…VKAALAQHQK (252 aa). Gly-351 lines the L-glutamine pocket. The Nucleophile; for glutamine hydrolysis role is filled by Cys-378. L-glutamine-binding positions include 379 to 382, Glu-402, and Arg-469; that span reads LGMQ. Catalysis depends on residues His-514 and Glu-516.

It belongs to the CTP synthase family. In terms of assembly, homotetramer.

It carries out the reaction UTP + L-glutamine + ATP + H2O = CTP + L-glutamate + ADP + phosphate + 2 H(+). It catalyses the reaction L-glutamine + H2O = L-glutamate + NH4(+). The enzyme catalyses UTP + NH4(+) + ATP = CTP + ADP + phosphate + 2 H(+). It participates in pyrimidine metabolism; CTP biosynthesis via de novo pathway; CTP from UDP: step 2/2. Allosterically activated by GTP, when glutamine is the substrate; GTP has no effect on the reaction when ammonia is the substrate. The allosteric effector GTP functions by stabilizing the protein conformation that binds the tetrahedral intermediate(s) formed during glutamine hydrolysis. Inhibited by the product CTP, via allosteric rather than competitive inhibition. In terms of biological role, catalyzes the ATP-dependent amination of UTP to CTP with either L-glutamine or ammonia as the source of nitrogen. Regulates intracellular CTP levels through interactions with the four ribonucleotide triphosphates. The chain is CTP synthase from Pseudomonas savastanoi pv. phaseolicola (strain 1448A / Race 6) (Pseudomonas syringae pv. phaseolicola (strain 1448A / Race 6)).